A 347-amino-acid chain; its full sequence is Melanoma-associated antigen B10 (347 aa).

The segment covering 1 to 18 (MPRGQKSKLRAREKRRQA) has biased composition (basic residues). 2 disordered regions span residues 1–20 (MPRGQKSKLRAREKRRQARG) and 56–92 (GASNNPHGLREAQSTSTSATAASHTRHPEGVNDQMEE). Over residues 67 to 78 (AQSTSTSATAAS) the composition is skewed to low complexity. The segment covering 81–92 (RHPEGVNDQMEE) has biased composition (basic and acidic residues). Residues 111-310 (VDEKVIILVH…SEFSNWYTEA (200 aa)) enclose the MAGE domain. The interval 328-347 (VSATAGARSKVKSSKSSQLQ) is disordered.

This Homo sapiens (Human) protein is Melanoma-associated antigen B10 (MAGEB10).